Reading from the N-terminus, the 195-residue chain is MASHSNKGKGIAEGSSQPQSQPQPQPHQPQSPPNPPALSRYESQKRRDWNTFCQYLRNQQPPVHISQCGSNHILDFLQYLDQFGKTKVHIHGCVFFGQVEPAGQCNCPLKQAWGSLDALIGRLRAAFEENGGLPERNPFAGGGIRVFLREVRDSQAKARGVPYKKRKKRKKRNPMKSHDGEDGTTGTSSSSNLAS.

Disordered stretches follow at residues 1-41 (MASH…LSRY) and 154-195 (SQAK…NLAS). Residues 21–36 (QPQPQPHQPQSPPNPP) are compositionally biased toward pro residues. The region spanning 40 to 167 (RYESQKRRDW…ARGVPYKKRK (128 aa)) is the ALOG domain. Residues 162 to 175 (PYKKRKKRKKRNPM) show a composition bias toward basic residues. The short motif at 165 to 169 (KRKKR) is the Nuclear localization signal element. Residues 184–195 (TTGTSSSSNLAS) are compositionally biased toward low complexity.

The protein belongs to the plant homeotic and developmental regulators ALOG protein family.

The protein resides in the nucleus. Probable transcription regulator that acts as a developmental regulator by promoting cell growth in response to light. This Arabidopsis thaliana (Mouse-ear cress) protein is Protein LIGHT-DEPENDENT SHORT HYPOCOTYLS 7 (LSH7).